We begin with the raw amino-acid sequence, 353 residues long: Alanine racemase (353 aa).

The active-site Proton acceptor; specific for D-alanine is the lysine 33. Lysine 33 is subject to N6-(pyridoxal phosphate)lysine. Arginine 129 lines the substrate pocket. Tyrosine 250 functions as the Proton acceptor; specific for L-alanine in the catalytic mechanism. A substrate-binding site is contributed by methionine 298.

It belongs to the alanine racemase family. Pyridoxal 5'-phosphate serves as cofactor.

The enzyme catalyses L-alanine = D-alanine. Its pathway is amino-acid biosynthesis; D-alanine biosynthesis; D-alanine from L-alanine: step 1/1. Functionally, catalyzes the interconversion of L-alanine and D-alanine. May also act on other amino acids. This is Alanine racemase (alr) from Azoarcus sp. (strain BH72).